The sequence spans 264 residues: Expansin-B3 (264 aa).

A signal peptide spans 1 to 25 (MQLFPVMLATLCIVLQLLIGSSALA). The 109-residue stretch at 54 to 162 (GGACGYGTLV…RRTACKYRGK (109 aa)) folds into the Expansin-like EG45 domain. Cystine bridges form between Cys-57–Cys-86, Cys-89–Cys-157, and Cys-94–Cys-100. Residues 175–256 (FWLSLLVEFE…NWAPKATYSS (82 aa)) form the Expansin-like CBD domain.

The protein belongs to the expansin family. Expansin B subfamily.

The protein localises to the secreted. Its subcellular location is the cell wall. The protein resides in the membrane. May cause loosening and extension of plant cell walls by disrupting non-covalent bonding between cellulose microfibrils and matrix glucans. No enzymatic activity has been found. The chain is Expansin-B3 (EXPB3) from Arabidopsis thaliana (Mouse-ear cress).